A 112-amino-acid polypeptide reads, in one-letter code: Large ribosomal subunit protein bL17 (112 aa).

It belongs to the bacterial ribosomal protein bL17 family. In terms of assembly, part of the 50S ribosomal subunit. Contacts protein L32.

This Carboxydothermus hydrogenoformans (strain ATCC BAA-161 / DSM 6008 / Z-2901) protein is Large ribosomal subunit protein bL17.